Reading from the N-terminus, the 475-residue chain is Ribulose bisphosphate carboxylase large chain (475 aa).

A propeptide spanning residues 1 to 2 is cleaved from the precursor; sequence MV. An N-acetylproline modification is found at Pro-3. At Lys-14 the chain carries N6,N6,N6-trimethyllysine. Substrate is bound by residues Asn-123 and Thr-173. Lys-175 (proton acceptor) is an active-site residue. Lys-177 provides a ligand contact to substrate. Residues Lys-201, Asp-203, and Glu-204 each contribute to the Mg(2+) site. The residue at position 201 (Lys-201) is an N6-carboxylysine. His-294 (proton acceptor) is an active-site residue. Residues Arg-295, His-327, and Ser-379 each coordinate substrate.

This sequence belongs to the RuBisCO large chain family. Type I subfamily. Heterohexadecamer of 8 large chains and 8 small chains; disulfide-linked. The disulfide link is formed within the large subunit homodimers. The cofactor is Mg(2+). In terms of processing, the disulfide bond which can form in the large chain dimeric partners within the hexadecamer appears to be associated with oxidative stress and protein turnover.

It localises to the plastid. The protein resides in the chloroplast. It catalyses the reaction 2 (2R)-3-phosphoglycerate + 2 H(+) = D-ribulose 1,5-bisphosphate + CO2 + H2O. The catalysed reaction is D-ribulose 1,5-bisphosphate + O2 = 2-phosphoglycolate + (2R)-3-phosphoglycerate + 2 H(+). In terms of biological role, ruBisCO catalyzes two reactions: the carboxylation of D-ribulose 1,5-bisphosphate, the primary event in carbon dioxide fixation, as well as the oxidative fragmentation of the pentose substrate in the photorespiration process. Both reactions occur simultaneously and in competition at the same active site. The chain is Ribulose bisphosphate carboxylase large chain from Tetradesmus obliquus (Green alga).